The primary structure comprises 133 residues: ATP synthase epsilon chain (133 aa).

Belongs to the ATPase epsilon chain family. As to quaternary structure, F-type ATPases have 2 components, CF(1) - the catalytic core - and CF(0) - the membrane proton channel. CF(1) has five subunits: alpha(3), beta(3), gamma(1), delta(1), epsilon(1). CF(0) has three main subunits: a, b and c.

Its subcellular location is the cell membrane. Its function is as follows. Produces ATP from ADP in the presence of a proton gradient across the membrane. This Clostridium perfringens (strain ATCC 13124 / DSM 756 / JCM 1290 / NCIMB 6125 / NCTC 8237 / Type A) protein is ATP synthase epsilon chain.